The sequence spans 273 residues: Bis(5'-nucleosyl)-tetraphosphatase, symmetrical (273 aa).

It belongs to the Ap4A hydrolase family.

The catalysed reaction is P(1),P(4)-bis(5'-adenosyl) tetraphosphate + H2O = 2 ADP + 2 H(+). Hydrolyzes diadenosine 5',5'''-P1,P4-tetraphosphate to yield ADP. In Histophilus somni (strain 129Pt) (Haemophilus somnus), this protein is Bis(5'-nucleosyl)-tetraphosphatase, symmetrical.